The primary structure comprises 459 residues: Serine protease HTRA3 (459 aa).

The N-terminal stretch at M1–A23 is a signal peptide. An IGFBP N-terminal domain is found at P27 to R90. Disulfide bonds link C31/C54, C35/C56, C40/C57, C45/C60, C68/C82, C76/C87, C89/C107, and C96/C132. Positions C76–S134 constitute a Kazal-like domain. The segment at G181–L347 is serine protease. Active-site charge relay system residues include H197, D233, and S311. Residues I365–L450 form the PDZ domain.

It belongs to the peptidase S1C family. In terms of assembly, homotrimer. Interacts with MYH9. Interacts with TGFB1; the interaction inhibits TGFB-mediated signaling. Interacts with BMP4; the interaction inhibits BMP4-mediated signaling. Interacts with TGFB2 and GDF5. As to expression, highest level of isoform 1 in maternal part of the placenta, moderate level in heart, testis and ovary, low level in muscle and lung. High expression found in granulosa cells of the ovary. Expressed in bone matrix, particularly in articular chondrocytes. Very low level of isoform 2 expressed in placenta. Expressed in the bone matrix, particularly in articular chondrocytes.

The protein localises to the secreted. Functionally, serine protease that cleaves beta-casein/CSN2 as well as several extracellular matrix (ECM) proteoglycans such as decorin/DCN, biglycan/BGN and fibronectin/FN1. Inhibits signaling mediated by TGF-beta family proteins possibly indirectly by degradation of these ECM proteoglycans. May act as a tumor suppressor. Negatively regulates, in vitro, trophoblast invasion during placental development and may be involved in the development of the placenta in vivo. May also have a role in ovarian development, granulosa cell differentiation and luteinization. This is Serine protease HTRA3 (Htra3) from Mus musculus (Mouse).